The chain runs to 476 residues: Cytoplasmic 60S subunit biogenesis factor ZNF622 (476 aa).

Ala-2 carries the N-acetylalanine modification. 2 U1-type zinc fingers span residues 4–28 (LTCI…TDWH) and 69–93 (TYCT…SRRH). Positions 137 to 243 (AIKAQPSTSP…AEDAAAEESP (107 aa)) are disordered. Over residues 167–177 (VPERDPTEKPP) the composition is skewed to basic and acidic residues. Residues 195–239 (EDGEEEGEEEEEDDEDEDWEDIDSDDGLECEDPGVEDQDAEDAAA) show a composition bias toward acidic residues. Ser-275 carries the post-translational modification Phosphoserine.

The protein belongs to the REI1 family. As to quaternary structure, homo- and heterodimer. Associates with pre-60S ribosomal particles. Interacts with MELK and MYBL2. Interacts with DNAJC21. Post-translationally, phosphorylated by MELK. The phosphorylation may redirect the protein to the nucleus. In terms of processing, ubiquitinated by HECTD1, leading to its degradation.

The protein resides in the cytoplasm. The protein localises to the nucleus. Its function is as follows. Pre-60S-associated cytoplasmic factor involved in the cytoplasmic maturation of the 60S subunit. This chain is Cytoplasmic 60S subunit biogenesis factor ZNF622 (Znf622), found in Mus musculus (Mouse).